A 428-amino-acid chain; its full sequence is Gamma-glutamyl phosphate reductase (428 aa).

The protein belongs to the gamma-glutamyl phosphate reductase family.

The protein resides in the cytoplasm. It catalyses the reaction L-glutamate 5-semialdehyde + phosphate + NADP(+) = L-glutamyl 5-phosphate + NADPH + H(+). It functions in the pathway amino-acid biosynthesis; L-proline biosynthesis; L-glutamate 5-semialdehyde from L-glutamate: step 2/2. Functionally, catalyzes the NADPH-dependent reduction of L-glutamate 5-phosphate into L-glutamate 5-semialdehyde and phosphate. The product spontaneously undergoes cyclization to form 1-pyrroline-5-carboxylate. In Clostridium tetani (strain Massachusetts / E88), this protein is Gamma-glutamyl phosphate reductase.